A 181-amino-acid chain; its full sequence is uncharacterized protein (181 aa).

The next 4 helical transmembrane spans lie at 3-23 (LSQT…VLIL), 67-87 (ALLL…GLSV), 92-112 (VLGV…VLFI), and 159-179 (MFIL…LWII).

Belongs to the YggT family.

It is found in the cell membrane. This is an uncharacterized protein from Haemophilus influenzae (strain ATCC 51907 / DSM 11121 / KW20 / Rd).